Here is an 895-residue protein sequence, read N- to C-terminus: Eukaryotic translation initiation factor 3 subunit C (895 aa).

The interval 1–108 (MSGFFRKVGD…DSDSEEEVKK (108 aa)) is disordered. Acidic residues-rich tracts occupy residues 11–31 (SDSE…ESGD) and 52–75 (DDSD…DDDN). Residues 638–812 (FHMHINLELL…NVVSFHRLEL (175 aa)) form the PCI domain. Residues 838–860 (DAKLGEGKEQRSGAGGERGDREG) are compositionally biased toward basic and acidic residues. Residues 838-895 (DAKLGEGKEQRSGAGGERGDREGGQPGGRRERRGGSAARGRGRGRGRAQQFQALGQKV) form a disordered region. Residues 884–895 (RAQQFQALGQKV) show a composition bias toward low complexity.

The protein belongs to the eIF-3 subunit C family. As to quaternary structure, component of the eukaryotic translation initiation factor 3 (eIF-3) complex.

The protein localises to the cytoplasm. Component of the eukaryotic translation initiation factor 3 (eIF-3) complex, which is involved in protein synthesis of a specialized repertoire of mRNAs and, together with other initiation factors, stimulates binding of mRNA and methionyl-tRNAi to the 40S ribosome. The eIF-3 complex specifically targets and initiates translation of a subset of mRNAs involved in cell proliferation. The protein is Eukaryotic translation initiation factor 3 subunit C of Mycosarcoma maydis (Corn smut fungus).